Consider the following 219-residue polypeptide: uncharacterized protein (219 aa).

The N-terminal stretch at 1–22 (MKKRRKICYCNTALLLMILLAG) is a signal peptide. The N-palmitoyl cysteine moiety is linked to residue Cys23. A lipid anchor (S-diacylglycerol cysteine) is attached at Cys23. The interval 26–89 (SKDGEAQQPS…SAEEKSKEDN (64 aa)) is disordered. Over residues 32–42 (QQPSNQASAVQ) the composition is skewed to polar residues. Basic and acidic residues predominate over residues 43–61 (TDEKHTEPEESTKIRKDEA).

Its subcellular location is the cell membrane. This is an uncharacterized protein from Bacillus subtilis (strain 168).